The sequence spans 101 residues: DET1- and DDB1-associated protein 1 (101 aa).

The tract at residues 67 to 101 (NAAKKRDQDQLEIGETSAPPRKIARTDSQEMNEDT) is disordered.

The protein belongs to the DDA1 family. In terms of assembly, component of numerous DCX (DDB1-CUL4-X-box) E3 ubiquitin-protein ligase complexes which consist of a core of DDB1, cullin-4 (CUL4A or CUL4B), DDA1 and RBX1.

Its pathway is protein modification; protein ubiquitination. Functions as a component of numerous distinct DCX (DDB1-CUL4-X-box) E3 ubiquitin-protein ligase complexes which mediate the ubiquitination and subsequent proteasomal degradation of target proteins. In the DCX complexes, acts as a scaffolding subunit required to stabilize the complex. The protein is DET1- and DDB1-associated protein 1 of Xenopus laevis (African clawed frog).